Here is a 598-residue protein sequence, read N- to C-terminus: IQ calmodulin-binding motif-containing protein 1 (598 aa).

The tract at residues 1-157 (MKPAGTDPRI…SLFWLLGGHV (157 aa)) is interaction with BBS1, BBS8 and BBS9. Positions 287-598 (QEVEEQKLHK…MLFIGGTKPP (312 aa)) are interaction with CEP290, BBS1, BBS2, BBS4, BBS5, BBS7, BBS8 and BBS9. 4 IQ domains span residues 294 to 317 (LHKA…LKKL), 318 to 338 (PSAV…MMLE), 387 to 416 (EEKS…SLTE), and 417 to 437 (YKAA…CRKK). Positions 336–362 (MLELNRQKEEEDLRLKLQLQRQRAMRL) form a coiled coil. The segment at 530-598 (AEGKEPEQFL…MLFIGGTKPP (69 aa)) is interaction with BBS1, BBS2, BBS4, BBS7, BBS8 and BBS9.

As to quaternary structure, interacts with calmodulin. Interacts with CEP290/NPHP6; IQCB1/NPHP5 and CEP290/NPHP6; are proposed to form a functional NPHP5-6 module localized to the centrosome. Interacts with ATXN10. Interacts with NPHP1, INVS, NPHP4 and RPGRIP1L; these interactions likely require additional interactors. Associates with the BBSome complex; interacts with BBS1, BBS2, BBS4, BBS5, BBS7, BBS8 and BBS9. As to expression, localized to the outer segment and connecting cilia of photoreceptor cells.

Its subcellular location is the cytoplasm. The protein resides in the cytoskeleton. It localises to the microtubule organizing center. It is found in the centrosome. Involved in ciliogenesis. The function in an early step in cilia formation depends on its association with CEP290/NPHP6. Involved in regulation of the BBSome complex integrity, specifically for presence of BBS2 and BBS5 in the complex, and in ciliary targeting of selected BBSome cargos. May play a role in controlling entry of the BBSome complex to cilia possibly implicating CEP290/NPHP6. The chain is IQ calmodulin-binding motif-containing protein 1 (Iqcb1) from Mus musculus (Mouse).